A 236-amino-acid chain; its full sequence is Sugar fermentation stimulation protein homolog (236 aa).

It belongs to the SfsA family.

This is Sugar fermentation stimulation protein homolog from Pseudomonas fluorescens (strain SBW25).